The primary structure comprises 298 residues: Aquaporin NIP2-1 (298 aa).

N-linked (GlcNAc...) asparagine glycosylation is found at Asn-4, Asn-13, and Asn-26. Helical transmembrane passes span 51-71 (VVSEVVATFLLVFMTCGAAGI) and 85-105 (SIAGGLIVTVMIYAVGHISGA). The NPA 1 signature appears at 108-110 (NPA). A run of 3 helical transmembrane segments spans residues 124–144 (IQVPFYWAAQFTGAICASFVL), 166–186 (SLVVEVIVTFNMMFVTLAVAT), and 194–214 (LAGLAVGSAVCITSIFAGAIS). The short motif at 219 to 221 (NPA) is the NPA 2 element. The chain crosses the membrane as a helical span at residues 237–257 (WIYFLGPVMGTLSGAWTYTFI).

The protein belongs to the MIP/aquaporin (TC 1.A.8) family. NIP (TC 1.A.8.12) subfamily. As to expression, mainly expressed in the roots. In roots, it localizes in the main and lateral roots, but not in root hairs. Within a root, it localizes on the plasma membrane of the distal side of both exodermis and endodermis, where casparian strips exist (at protein level). Expressed low levels in leaves and anthers.

It is found in the cell membrane. Silicon influx transporter responsible for silicon transport from the external solution to the root cells. Is coupled with the silicon efflux transporter LSI2 in both exodermal and endodermal root cells for an efficient silicon transport across the cells into the stele. Silicon is beneficial to plant growth and helps plants to overcome abiotic and biotic stresses by preventing lodging (falling over) and increasing resistance to pests and diseases, as well as other stresses. Is coupled with LSI2 transporter in roots for efficient uptake of arsenite, which is further dispatched in shoots and grains. Mediates uptake of methylated arsenic species in roots. The protein is Aquaporin NIP2-1 of Oryza sativa subsp. japonica (Rice).